Here is a 946-residue protein sequence, read N- to C-terminus: Probable inactive ATP-dependent zinc metalloprotease FTSHI 1, chloroplastic (946 aa).

The N-terminal 54 residues, 1-54 (MASIDNVFSLGTRFSIPENPKRSILKHATTSSFSARTQTRWRAPILRRSFTVLC), are a transit peptide targeting the chloroplast. The next 3 membrane-spanning stretches (helical) occupy residues 289–309 (AVIA…VFAV), 320–340 (VVWP…LGVL), and 369–389 (VASS…MVLL). An ATP-binding site is contributed by 470–477 (GPPGCGKT).

In the N-terminal section; belongs to the AAA ATPase family. It in the C-terminal section; belongs to the peptidase M41 family. As to quaternary structure, oligomer.

It localises to the plastid. It is found in the chloroplast inner membrane. Functions in chloroplast biogenesis and chloroplast division. Required for plastid development during embryogenesis. Might be involved in chaperone functions or play a structural role in the thylakoid FtsH complex. The sequence is that of Probable inactive ATP-dependent zinc metalloprotease FTSHI 1, chloroplastic from Arabidopsis thaliana (Mouse-ear cress).